Reading from the N-terminus, the 290-residue chain is Porphobilinogen deaminase (290 aa).

Residue cysteine 237 is modified to S-(dipyrrolylmethanemethyl)cysteine.

This sequence belongs to the HMBS family. In terms of assembly, monomer. Dipyrromethane is required as a cofactor.

The catalysed reaction is 4 porphobilinogen + H2O = hydroxymethylbilane + 4 NH4(+). Its pathway is porphyrin-containing compound metabolism; protoporphyrin-IX biosynthesis; coproporphyrinogen-III from 5-aminolevulinate: step 2/4. Functionally, tetrapolymerization of the monopyrrole PBG into the hydroxymethylbilane pre-uroporphyrinogen in several discrete steps. The chain is Porphobilinogen deaminase from Clostridium kluyveri (strain NBRC 12016).